The primary structure comprises 375 residues: MSVATLSAPEKTRVIVGMSGGVDSSVSALLLLEQGYQVEGLFMKNWEEDDGTEYCTAKEDLADAQAVCDRIGIKLHTANFAAEYWDNVFEHFLAEYKAGRTPNPDILCNREIKFKAFLDYALMLGADLIATGHYVRRRDRDGRSELLKGLDPNKDQSYFLHAVGGEQLAKTLFPVGELEKPEVRAIAEKHSLATAKKKDSTGICFIGERRFSDFLKQYLPAQPGNIEAVDGEVIGRHHGLMYHTIGQRQGLGIGGLKDASDEPWYVLSKDLQRNVLIVGQGNDHPWLFSRALLASEIYWVNPVDLSAPLKLTAKVRYRQSDQACTLEQTSDGYRAVFEVPQRAVTPGQSVVFYDGEVCLGGGVIEQAEPWFEGRA.

Residues 17 to 24 and M43 each bind ATP; that span reads GMSGGVDS. Positions 103 to 105 are interaction with target base in tRNA; it reads NPD. The active-site Nucleophile is the C108. C108 and C204 are oxidised to a cystine. G132 is a binding site for ATP. Positions 154-156 are interaction with tRNA; the sequence is KDQ. Catalysis depends on C204, which acts as the Cysteine persulfide intermediate. The tract at residues 316–317 is interaction with tRNA; the sequence is RY.

It belongs to the MnmA/TRMU family.

The protein resides in the cytoplasm. It carries out the reaction S-sulfanyl-L-cysteinyl-[protein] + uridine(34) in tRNA + AH2 + ATP = 2-thiouridine(34) in tRNA + L-cysteinyl-[protein] + A + AMP + diphosphate + H(+). In terms of biological role, catalyzes the 2-thiolation of uridine at the wobble position (U34) of tRNA, leading to the formation of s(2)U34. This is tRNA-specific 2-thiouridylase MnmA from Stutzerimonas stutzeri (strain A1501) (Pseudomonas stutzeri).